Reading from the N-terminus, the 273-residue chain is Dermonecrotic toxin LhSicTox-alphaIA1iv (273 aa).

Residue H5 is part of the active site. The Mg(2+) site is built by E25 and D27. H41 (nucleophile) is an active-site residue. 2 cysteine pairs are disulfide-bonded: C45/C51 and C47/C190. D85 lines the Mg(2+) pocket.

It belongs to the arthropod phospholipase D family. Class II subfamily. Mg(2+) serves as cofactor. In terms of tissue distribution, expressed by the venom gland.

Its subcellular location is the secreted. The enzyme catalyses an N-(acyl)-sphingosylphosphocholine = an N-(acyl)-sphingosyl-1,3-cyclic phosphate + choline. The catalysed reaction is an N-(acyl)-sphingosylphosphoethanolamine = an N-(acyl)-sphingosyl-1,3-cyclic phosphate + ethanolamine. It catalyses the reaction a 1-acyl-sn-glycero-3-phosphocholine = a 1-acyl-sn-glycero-2,3-cyclic phosphate + choline. It carries out the reaction a 1-acyl-sn-glycero-3-phosphoethanolamine = a 1-acyl-sn-glycero-2,3-cyclic phosphate + ethanolamine. Its function is as follows. Dermonecrotic toxins cleave the phosphodiester linkage between the phosphate and headgroup of certain phospholipids (sphingolipid and lysolipid substrates), forming an alcohol (often choline) and a cyclic phosphate. This toxin acts on sphingomyelin (SM). It may also act on ceramide phosphoethanolamine (CPE), lysophosphatidylcholine (LPC) and lysophosphatidylethanolamine (LPE), but not on lysophosphatidylserine (LPS), and lysophosphatidylglycerol (LPG). It acts by transphosphatidylation, releasing exclusively cyclic phosphate products as second products. Induces dermonecrosis, hemolysis, increased vascular permeability, edema, inflammatory response, and platelet aggregation. This Loxosceles hirsuta (Recluse spider) protein is Dermonecrotic toxin LhSicTox-alphaIA1iv.